The chain runs to 311 residues: Phospholipid phosphatase 3 (311 aa).

The Cytoplasmic segment spans residues 1–33; it reads MQNYKYDKAIVPESKNGGSPALNNNPRRSGSKR. Residue S19 is modified to Phosphoserine. A helical transmembrane segment spans residues 34 to 54; it reads VLLICLDLFCLFMAGLPFLII. Residues 55-85 lie on the Extracellular side of the membrane; it reads ETSTIKPYHRGFYCNDESIKYPLKTGETIND. The helical transmembrane segment at 86–106 threads the bilayer; that stretch reads AVLCAVGIVIAILAIITGEFY. Residues 107–122 lie on the Cytoplasmic side of the membrane; it reads RIYYLKKSRSTIQNPY. Residues 109 to 110 carry the Dityrosine basolateral targeting motif motif; sequence YY. A helical membrane pass occupies residues 123–143; sequence VAALYKQVGCFLFGCAISQSF. The Extracellular segment spans residues 144–193; sequence TDIAKVSIGRLRPHFLSVCNPDFSQINCSEGYIQNYRCRGDDSKVQEARK. Positions 148–156 are phosphatase sequence motif I; that stretch reads KVSIGRLRP. An N-linked (GlcNAc...) asparagine glycan is attached at N170. The short motif at 182 to 184 is the Integrin-binding motif element; that stretch reads RGD. The helical transmembrane segment at 194-214 threads the bilayer; it reads SFFSGHASFSMYTMLYLVLYL. The interval 196-199 is phosphatase sequence motif II; it reads FSGH. H199 functions as the Proton donors in the catalytic mechanism. The Cytoplasmic portion of the chain corresponds to 215-225; the sequence is QARFTWRGARL. The chain crosses the membrane as a helical span at residues 226-243; the sequence is LRPLLQFTLIMMAFYTGL. The interval 244–255 is phosphatase sequence motif III; that stretch reads SRVSDHKHHPSD. Over 244–257 the chain is Extracellular; it reads SRVSDHKHHPSDVL. H251 (nucleophile) is an active-site residue. Residues 258–278 form a helical membrane-spanning segment; sequence AGFAQGALVACCIVFFVSDLF. The segment at 275 to 311 is mediates interaction with CTNND1; the sequence is SDLFKTKTTLSLPAPAIRKEILSPVDIIDRNNHHNMM. Over 279-311 the chain is Cytoplasmic; that stretch reads KTKTTLSLPAPAIRKEILSPVDIIDRNNHHNMM.

The protein belongs to the PA-phosphatase related phosphoesterase family. Forms functional homodimers and homooligomers that are not required for substrate recognition and catalytic activity. Can also form heterooligomers with other PLPP2 and PLPP3. Interacts with CTNND1; negatively regulates the PLPP3-mediated stabilization of beta-catenin/CTNNB1. In terms of processing, N-glycosylated. Contains high-mannose oligosaccharides. As to expression, ubiquitously expressed. Highly expressed in heart and placenta.

It is found in the cell membrane. It localises to the basolateral cell membrane. The protein localises to the endoplasmic reticulum membrane. Its subcellular location is the endoplasmic reticulum-Golgi intermediate compartment membrane. The protein resides in the golgi apparatus membrane. It is found in the golgi apparatus. It localises to the trans-Golgi network membrane. The protein localises to the membrane raft. It carries out the reaction a 1,2-diacyl-sn-glycero-3-phosphate + H2O = a 1,2-diacyl-sn-glycerol + phosphate. The catalysed reaction is 1,2-dihexadecanoyl-sn-glycero-3-phosphate + H2O = 1,2-dihexadecanoyl-sn-glycerol + phosphate. It catalyses the reaction 1,2-di-(9Z-octadecenoyl)-sn-glycero-3-phosphate + H2O = 1,2-di-(9Z-octadecenoyl)-sn-glycerol + phosphate. The enzyme catalyses a monoacyl-sn-glycero-3-phosphate + H2O = a monoacylglycerol + phosphate. It carries out the reaction (9Z)-octadecenoyl-sn-glycero-3-phosphate + H2O = (9Z-octadecenoyl)-glycerol + phosphate. The catalysed reaction is sphing-4-enine 1-phosphate + H2O = sphing-4-enine + phosphate. It catalyses the reaction an N-acylsphing-4-enine 1-phosphate + H2O = an N-acylsphing-4-enine + phosphate. The enzyme catalyses N-(octanoyl)-sphing-4-enine-1-phosphate + H2O = N-octanoylsphing-4-enine + phosphate. It carries out the reaction N-(9Z-octadecenoyl)-ethanolamine phosphate + H2O = N-(9Z-octadecenoyl) ethanolamine + phosphate. The protein operates within lipid metabolism; phospholipid metabolism. Magnesium-independent phospholipid phosphatase. Insensitive to N-ethylmaleimide. Inhibited by sphingosine, zinc ions and modestly by propanolol. Its function is as follows. Magnesium-independent phospholipid phosphatase of the plasma membrane that catalyzes the dephosphorylation of a variety of glycerolipid and sphingolipid phosphate esters including phosphatidate/PA, lysophosphatidate/LPA, diacylglycerol pyrophosphate/DGPP, sphingosine 1-phosphate/S1P and ceramide 1-phosphate/C1P. Also acts on N-oleoyl ethanolamine phosphate/N-(9Z-octadecenoyl)-ethanolamine phosphate, a potential physiological compound. Has both an extracellular and an intracellular phosphatase activity, allowing the hydrolysis and the cellular uptake of these bioactive lipid mediators from the milieu, regulating signal transduction in different cellular processes. Through the dephosphorylation of extracellular sphingosine-1-phosphate and the regulation of its extra- and intracellular availability, plays a role in vascular homeostasis, regulating endothelial cell migration, adhesion, survival, proliferation and the production of pro-inflammatory cytokines. By maintaining the appropriate levels of this lipid in the cerebellum, also ensure its proper development and function. Through its intracellular lipid phosphatase activity may act in early compartments of the secretory pathway, regulating the formation of Golgi to endoplasmic reticulum retrograde transport carriers. In terms of biological role, independently of this phosphatase activity may also function in the Wnt signaling pathway and the stabilization of beta-catenin/CTNNB1, thereby regulating cell proliferation, migration and differentiation in angiogenesis or yet in tumor growth. Also plays a role in integrin-mediated cell-cell adhesion in angiogenesis. The chain is Phospholipid phosphatase 3 from Homo sapiens (Human).